The chain runs to 189 residues: Elongation factor P (189 aa).

The protein belongs to the elongation factor P family.

Its subcellular location is the cytoplasm. It participates in protein biosynthesis; polypeptide chain elongation. Its function is as follows. Involved in peptide bond synthesis. Stimulates efficient translation and peptide-bond synthesis on native or reconstituted 70S ribosomes in vitro. Probably functions indirectly by altering the affinity of the ribosome for aminoacyl-tRNA, thus increasing their reactivity as acceptors for peptidyl transferase. This is Elongation factor P from Onion yellows phytoplasma (strain OY-M).